A 282-amino-acid polypeptide reads, in one-letter code: Shikimate dehydrogenase (NADP(+)) (282 aa).

Shikimate is bound by residues 15-17 (SKS) and T62. The active-site Proton acceptor is K66. 2 residues coordinate shikimate: N87 and D103. NADP(+) contacts are provided by residues 127–131 (GAGGA), 151–156 (NRTHTK), and M220. Y222 lines the shikimate pocket. G244 is a binding site for NADP(+).

The protein belongs to the shikimate dehydrogenase family. Homodimer.

It carries out the reaction shikimate + NADP(+) = 3-dehydroshikimate + NADPH + H(+). It participates in metabolic intermediate biosynthesis; chorismate biosynthesis; chorismate from D-erythrose 4-phosphate and phosphoenolpyruvate: step 4/7. Involved in the biosynthesis of the chorismate, which leads to the biosynthesis of aromatic amino acids. Catalyzes the reversible NADPH linked reduction of 3-dehydroshikimate (DHSA) to yield shikimate (SA). This chain is Shikimate dehydrogenase (NADP(+)), found in Shewanella baltica (strain OS195).